A 747-amino-acid polypeptide reads, in one-letter code: Protein MTSS 2 (747 aa).

Residues 1 to 252 (METAEKECGA…EQVIKDLKGS (252 aa)) enclose the IMD domain. The stretch at 135–159 (EIKKKSSDTLKLQKKARKELLGKGD) forms a coiled coil. Composition is skewed to low complexity over residues 256–284 (WSYQTPPSSPSSSSSRKSSMCSAPSSSSS), 321–332 (SSVSSHDSGFVS), and 349–367 (TSQKSSSSASSEASETCQS). Disordered regions lie at residues 256-302 (WSYQ…YSPS), 318-441 (ARLS…EEVS), 457-522 (LEHQ…RNSN), and 543-599 (PTAG…PTVP). Thr260 is modified (phosphothreonine). A Phosphoserine modification is found at Ser264. The segment covering 368 to 378 (VSECSSPTSDW) has biased composition (polar residues). Residues 397-406 (DRVELLRDTE) are compositionally biased toward basic and acidic residues. Ser441 is subject to Phosphoserine. Low complexity predominate over residues 466–479 (SLQYSSGYSTQTTT). Over residues 480 to 492 (PSCSEDTIPSQGS) the composition is skewed to polar residues. Residues Ser579, Ser601, Ser612, Ser624, Ser634, and Ser639 each carry the phosphoserine modification. Disordered regions lie at residues 638-664 (LSLPNTAWGSPSPEAAGYPGAGAEDEQ) and 691-720 (GQFPFPTALSATPTEETPTPPPAATSDPPA). The residue at position 643 (Thr643) is a Phosphothreonine. Composition is skewed to low complexity over residues 646-659 (GSPSPEAAGYPGAG) and 696-707 (PTALSATPTEET). The WH2 domain maps to 719–736 (PAEDMLVAIRRGVRLRRT).

Belongs to the MTSS family. In terms of assembly, interacts (via IMD domain) with RAC1; this interaction may be important to potentiate PDGF-induced RAC1 activation.

Its subcellular location is the cytoplasm. It is found in the cell projection. The protein resides in the ruffle. Involved in plasma membrane dynamics. Potentiated PDGF-mediated formation of membrane ruffles and lamellipodia in fibroblasts, acting via RAC1 activation. May function in actin bundling. The chain is Protein MTSS 2 from Homo sapiens (Human).